The sequence spans 546 residues: Probable acyl-activating enzyme 21 (546 aa).

Belongs to the ATP-dependent AMP-binding enzyme family.

Functionally, may act as an acid--thiol ligase that activates carboxylic acids by forming acyl-CoAs. The sequence is that of Probable acyl-activating enzyme 21 (AEE21) from Arabidopsis thaliana (Mouse-ear cress).